Reading from the N-terminus, the 365-residue chain is 3-isopropylmalate dehydrogenase (365 aa).

G80–E91 provides a ligand contact to NAD(+). R98, R108, R137, and D226 together coordinate substrate. D226, D251, and D255 together coordinate Mg(2+). G290 to N301 lines the NAD(+) pocket.

It belongs to the isocitrate and isopropylmalate dehydrogenases family. In terms of assembly, homodimer. Mg(2+) serves as cofactor. It depends on Mn(2+) as a cofactor.

Its subcellular location is the cytoplasm. It carries out the reaction (2R,3S)-3-isopropylmalate + NAD(+) = 4-methyl-2-oxopentanoate + CO2 + NADH. It participates in amino-acid biosynthesis; L-leucine biosynthesis; L-leucine from 3-methyl-2-oxobutanoate: step 3/4. Its function is as follows. Catalyzes the oxidation of 3-carboxy-2-hydroxy-4-methylpentanoate (3-isopropylmalate) to 3-carboxy-4-methyl-2-oxopentanoate. The product decarboxylates to 4-methyl-2 oxopentanoate. In Maudiozyma exigua (Yeast), this protein is 3-isopropylmalate dehydrogenase (LEU2).